Consider the following 371-residue polypeptide: Alanine racemase (371 aa).

The Proton acceptor; specific for D-alanine role is filled by Lys39. Position 39 is an N6-(pyridoxal phosphate)lysine (Lys39). Arg137 contributes to the substrate binding site. Tyr266 acts as the Proton acceptor; specific for L-alanine in catalysis. Met314 lines the substrate pocket.

It belongs to the alanine racemase family. The cofactor is pyridoxal 5'-phosphate.

It catalyses the reaction L-alanine = D-alanine. Its pathway is amino-acid biosynthesis; D-alanine biosynthesis; D-alanine from L-alanine: step 1/1. Its function is as follows. Catalyzes the interconversion of L-alanine and D-alanine. May also act on other amino acids. This is Alanine racemase (alr) from Desulfovibrio desulfuricans (strain ATCC 27774 / DSM 6949 / MB).